Reading from the N-terminus, the 172-residue chain is EPIDERMAL PATTERNING FACTOR-like protein 7 (172 aa).

The signal sequence occupies residues 1–27; sequence MDHVNPTLFHLKSLSIFTLTLLYISSP. Disulfide bonds link cysteine 128/cysteine 159, cysteine 132/cysteine 138, cysteine 135/cysteine 161, and cysteine 147/cysteine 153.

The protein belongs to the plant cysteine rich small secretory peptide family. Epidermal patterning factor subfamily.

It is found in the secreted. In terms of biological role, controls stomatal patterning. This Arabidopsis thaliana (Mouse-ear cress) protein is EPIDERMAL PATTERNING FACTOR-like protein 7.